We begin with the raw amino-acid sequence, 335 residues long: Proline-rich protein 1 (335 aa).

Residues 1-22 (MAITRASFAICILLSLATIATA) form the signal peptide. Repeat copies occupy residues 30 to 34 (PPVYT), 35 to 39 (SPVNK), 40 to 43 (PTLP), 44 to 48 (PPVYT), 49 to 53 (PPVHK), 54 to 57 (PTLP), 58 to 62 (PPVYT), 63 to 67 (PPVHK), 68 to 71 (PTLS), 72 to 76 (PPVYT), 77 to 81 (KPTLP), 82 to 86 (PPAYT), 87 to 91 (PPVYN), 92 to 96 (KPTLP), 97 to 101 (APVYT), 102 to 106 (PPVYK), 107 to 110 (PTLS), 111 to 115 (PPVYT), 116 to 120 (KPTLL), 121 to 125 (PPVFK), 126 to 130 (PTLSP), 131 to 135 (PVYTK), 136 to 139 (PTLS), 140 to 144 (PTVYK), 145 to 148 (PTLS), 149 to 153 (PPVNN), 154 to 158 (KPSLS), 159 to 163 (PPVYK), 164 to 167 (PTLS), 168 to 172 (PPVYT), 173 to 177 (KPTLP), 178 to 182 (PPVYK), 184 to 189 (SPSYSP), 190 to 194 (PPPFA), 195 to 200 (PKPTYT), 201 to 207 (PPTKPYV), 208 to 212 (PEIIK), 284 to 288 (SPVET), and 319 to 323 (PFYFT). Residues 30–323 (PPVYTSPVNK…LFNVGPFYFT (294 aa)) are 39 X 5 AA approximate repeats.

The protein belongs to the plant proline-rich protein superfamily. ENOD12 family. Exclusively expressed in roots, especially in root hairs.

It localises to the secreted. The protein localises to the cell wall. Its function is as follows. May contribute to cell wall structure in root hairs. This is Proline-rich protein 1 (PRP1) from Arabidopsis thaliana (Mouse-ear cress).